The chain runs to 412 residues: Glucose/galactose transporter (412 aa).

11 helical membrane passes run 21 to 41, 62 to 82, 90 to 110, 113 to 133, 158 to 178, 192 to 212, 239 to 259, 310 to 330, 331 to 351, 363 to 383, and 388 to 408; these read YGFALTSLTLLFFMWGFITCL, LIQFCFFGAYFIVSLPAGQLV, GIVVGLIVAAIGCALFIPAAS, VYALFLGALFVLASGVTILQV, FNSLGTTVAPVFGAVLILSAA, FPYLLLALAFTVLAIIFAILK, LGAIGIFVYVGAEVSVGSFLV, AFVAIILLFITVATTGHIAMW, SVLAIGLFNSIMFPTIFSLAL, GILCLAIVGGAIVPLIQGALA, and IHLAFLMPIICYAYIAFYGLI.

This sequence belongs to the major facilitator superfamily. FHS transporter (TC 2.A.1.7) family.

It localises to the cell inner membrane. Its function is as follows. Intake of glucose and galactose. The protein is Glucose/galactose transporter (gluP) of Brucella abortus (strain 2308).